The primary structure comprises 769 residues: Serine/threonine-protein kinase PLK4 (769 aa).

The Protein kinase domain occupies 10-263; sequence YEVYEILGKG…LDQVLQHPFM (254 aa). ATP contacts are provided by residues 16 to 24 and Lys-39; that span reads LGKGGFASV. Asp-134 acts as the Proton acceptor in catalysis. Disordered regions lie at residues 280–304, 337–380, and 592–651; these read SSDS…SSYG, PQQR…LDIP, and APLT…VLSS. Residues 337–371 show a composition bias toward polar residues; sequence PQQRPQSASHNKPTSDFFSGISNDPRTMAPSSPTK. A Cryptic POLO box 1 (CPB1) domain is found at 374–491; sequence KKRLDIPPLN…ARFVQMVKAK (118 aa). Residues 492–595 enclose the Cryptic POLO box 2 (CPB2) domain; that stretch reads TPKITYYSEK…GRRPANAPLT (104 aa). Residues 605 to 648 show a composition bias toward polar residues; that stretch reads TKENQLYSNISSPNTPQTPHQMPSFAMSTASHTSAGNPLTQRPV. The POLO box domain occupies 662–745; it reads AMKKCTIAGV…MPAILRELNA (84 aa).

Belongs to the protein kinase superfamily. Ser/Thr protein kinase family. CDC5/Polo subfamily. Homodimer. Ubiquitinated; leading to its degradation by the proteasome.

The protein localises to the cytoplasm. Its subcellular location is the cytoskeleton. It is found in the microtubule organizing center. The protein resides in the centrosome. It localises to the centriole. It carries out the reaction L-seryl-[protein] + ATP = O-phospho-L-seryl-[protein] + ADP + H(+). The enzyme catalyses L-threonyl-[protein] + ATP = O-phospho-L-threonyl-[protein] + ADP + H(+). In terms of biological role, serine/threonine-protein kinase that plays a central role in centriole duplication. Able to trigger procentriole formation on the surface of the mother centriole cylinder, leading to the recruitment of centriole biogenesis proteins. When overexpressed, it is able to induce centrosome amplification through the simultaneous generation of multiple procentrioles adjoining each parental centriole during S phase. This is Serine/threonine-protein kinase PLK4 (SAK) from Aedes aegypti (Yellowfever mosquito).